We begin with the raw amino-acid sequence, 433 residues long: uncharacterized protein (433 aa).

Positions 1-59 constitute a TRAM domain; it reads MGEEYEVEIGPVAHGGHCIARTSEGQVLFVRHALPGERVLARVTEGEEGARYLRADAVE. Residues Cys72, Cys80, Cys83, and Cys168 each contribute to the [4Fe-4S] cluster site. The S-adenosyl-L-methionine site is built by Gln262, Tyr291, Glu315, and Asp359. Residue Cys386 is the Nucleophile of the active site.

The protein belongs to the class I-like SAM-binding methyltransferase superfamily. RNA M5U methyltransferase family.

This is an uncharacterized protein from Streptomyces avermitilis (strain ATCC 31267 / DSM 46492 / JCM 5070 / NBRC 14893 / NCIMB 12804 / NRRL 8165 / MA-4680).